The following is a 315-amino-acid chain: Vomeronasal type-1 receptor 54 (315 aa).

The Extracellular segment spans residues 1-15 (MNKMNRLSHNTEIRN). Residues 16–40 (AIYSGVGIGISGNSFLLLFHIFKYI) traverse the membrane as a helical segment. Topologically, residues 41–51 (RGQRSRHIDLP) are cytoplasmic. A helical membrane pass occupies residues 52–71 (IGLLSLIHLVMLIAMSLVAT). Topologically, residues 72-90 (DIFMPWGRWGDTTCKCVIS) are extracellular. Residues cysteine 85 and cysteine 172 are joined by a disulfide bond. The chain crosses the membrane as a helical span at residues 91–112 (LYRFCRSLSLCATSLLSILQAV). Topologically, residues 113–132 (TLNPRNSCLEKFKRKSPHYM) are cytoplasmic. Residues 133-154 (LGCLLFLSVFYTFISSPLATYI) form a helical membrane-spanning segment. The Extracellular segment spans residues 155–193 (TAKSNLTSPSFTYITTSCSLAPMSYSFHLTVFILLTSRD). Residues 194–212 (VIFVGLMLLSSGYMVTFLG) traverse the membrane as a helical segment. Over 213–239 (RHKKQSQFLHITSFSLKPSAEKRAMRT) the chain is Cytoplasmic. The chain crosses the membrane as a helical span at residues 240-260 (ILCLMSFFVLMYTLDSIVSYI). Residues 261 to 267 (RSIDDGQ) lie on the Extracellular side of the membrane. A helical membrane pass occupies residues 268-288 (IFYCVHIFTAHGYATVSPFLI). Topologically, residues 289 to 315 (LSTEKYIINIFRSTFGRMVTIILLRNR) are cytoplasmic.

It belongs to the G-protein coupled receptor 1 family.

The protein resides in the cell membrane. Functionally, putative pheromone receptor implicated in the regulation of social and reproductive behavior. The polypeptide is Vomeronasal type-1 receptor 54 (Vmn1r54) (Mus musculus (Mouse)).